Here is a 679-residue protein sequence, read N- to C-terminus: UvrABC system protein B (679 aa).

The Helicase ATP-binding domain occupies 25-412; the sequence is EGVNQGQRYQ…DGHLAEQVIR (388 aa). 38–45 serves as a coordination point for ATP; sequence GATGTGKT. The Beta-hairpin motif lies at 91–114; sequence YYDYYQPEAYVPVSDTYIAKTSSI. The Helicase C-terminal domain maps to 429 to 591; the sequence is QVDDLLAEIR…IVPRPAGKRA (163 aa). Positions 639 to 674 constitute a UVR domain; the sequence is PELIDQLETKMKEAAKNLNFEEAASLRDRIKKFRQK.

Belongs to the UvrB family. Forms a heterotetramer with UvrA during the search for lesions. Interacts with UvrC in an incision complex.

It is found in the cytoplasm. Its function is as follows. The UvrABC repair system catalyzes the recognition and processing of DNA lesions. A damage recognition complex composed of 2 UvrA and 2 UvrB subunits scans DNA for abnormalities. Upon binding of the UvrA(2)B(2) complex to a putative damaged site, the DNA wraps around one UvrB monomer. DNA wrap is dependent on ATP binding by UvrB and probably causes local melting of the DNA helix, facilitating insertion of UvrB beta-hairpin between the DNA strands. Then UvrB probes one DNA strand for the presence of a lesion. If a lesion is found the UvrA subunits dissociate and the UvrB-DNA preincision complex is formed. This complex is subsequently bound by UvrC and the second UvrB is released. If no lesion is found, the DNA wraps around the other UvrB subunit that will check the other stand for damage. In Prochlorococcus marinus (strain MIT 9313), this protein is UvrABC system protein B.